A 118-amino-acid polypeptide reads, in one-letter code: MASARGAKQSSPRVGTTRYTETSTVRVETSSHRVETSSRRVETSQRRSEGPSLSPSGKRLPRILEASSRHVESSSQRTETTSRHVRASSLRVETSLHCAESPTPRAKPAARQNEKTAR.

The interval 1–118 is disordered; the sequence is MASARGAKQS…AARQNEKTAR (118 aa). Positions 13–28 are enriched in low complexity; that stretch reads RVGTTRYTETSTVRVE. Residues 29 to 49 are compositionally biased toward basic and acidic residues; it reads TSSHRVETSSRRVETSQRRSE.

This is an uncharacterized protein from Homo sapiens (Human).